We begin with the raw amino-acid sequence, 270 residues long: Peflin (270 aa).

A disordered region spans residues 1–97 (MSYQYGQGYS…YRQQGSAGNV (97 aa)). 5 consecutive repeat copies span residues 22–30 (PPRAPYAGG), 44–54 (PPGQQYGGGSP), 62–70 (GPRAPYGGG), 72–81 (APGGPYGGYG), and 83–91 (PQGGPYRQQ). The segment at 22–91 (PPRAPYAGGP…QPQGGPYRQQ (70 aa)) is 5 X 9 AA approximate tandem repeat of [AP]-P-G-G-P-Y-G-G-P-P. Composition is skewed to low complexity over residues 26–47 (PYAG…PPGQ) and 55–66 (YGSYGQPGPRAP). Over residues 67–84 (YGGGQAPGGPYGGYGQPQ) the composition is skewed to gly residues. 5 consecutive EF-hand domains span residues 100–135 (GVNP…FNNS), 141–169 (TCIM…WTFL), 170–202 (QQWR…MGYN), 203–239 (LSPQ…LQSM), and 240–269 (TQAF…ITRL). Residues Asp-113, Asp-115, Ser-117, Tyr-119, and Glu-124 each coordinate Ca(2+). Residues Asp-180, Asp-182, Ser-184, Ser-186, and Glu-191 each coordinate Ca(2+).

In terms of assembly, heterodimer; heterodimerizes (via the EF-hand 5) with pdcd6.

The protein localises to the cytoplasm. The protein resides in the endoplasmic reticulum. Its subcellular location is the membrane. It is found in the cytoplasmic vesicle. It localises to the COPII-coated vesicle membrane. Its function is as follows. Calcium-binding protein that acts as an adapter that bridges unrelated proteins or stabilizes weak protein-protein complexes in response to calcium. Acts as a negative regulator of ER-Golgi transport. This is Peflin from Danio rerio (Zebrafish).